The chain runs to 136 residues: Nucleoside diphosphate kinase (136 aa).

The ATP site is built by lysine 10, phenylalanine 58, arginine 86, threonine 92, arginine 104, and asparagine 114. The active-site Pros-phosphohistidine intermediate is histidine 117.

This sequence belongs to the NDK family. In terms of assembly, homotetramer. Mg(2+) serves as cofactor.

It is found in the cytoplasm. The enzyme catalyses a 2'-deoxyribonucleoside 5'-diphosphate + ATP = a 2'-deoxyribonucleoside 5'-triphosphate + ADP. It catalyses the reaction a ribonucleoside 5'-diphosphate + ATP = a ribonucleoside 5'-triphosphate + ADP. Major role in the synthesis of nucleoside triphosphates other than ATP. The ATP gamma phosphate is transferred to the NDP beta phosphate via a ping-pong mechanism, using a phosphorylated active-site intermediate. The chain is Nucleoside diphosphate kinase from Mycobacterium avium (strain 104).